Here is a 238-residue protein sequence, read N- to C-terminus: Purine nucleoside phosphorylase DeoD-type (238 aa).

His-4 contributes to the a purine D-ribonucleoside binding site. Residues Gly-20, Arg-24, Arg-43, and 87-90 (RVGS) contribute to the phosphate site. Residues 179 to 181 (EME) and 203 to 204 (SD) each bind a purine D-ribonucleoside. Asp-204 serves as the catalytic Proton donor.

It belongs to the PNP/UDP phosphorylase family. Homohexamer; trimer of homodimers.

It catalyses the reaction a purine D-ribonucleoside + phosphate = a purine nucleobase + alpha-D-ribose 1-phosphate. The enzyme catalyses a purine 2'-deoxy-D-ribonucleoside + phosphate = a purine nucleobase + 2-deoxy-alpha-D-ribose 1-phosphate. Functionally, catalyzes the reversible phosphorolytic breakdown of the N-glycosidic bond in the beta-(deoxy)ribonucleoside molecules, with the formation of the corresponding free purine bases and pentose-1-phosphate. This chain is Purine nucleoside phosphorylase DeoD-type, found in Haemophilus ducreyi (strain 35000HP / ATCC 700724).